A 592-amino-acid polypeptide reads, in one-letter code: Aspartate--tRNA ligase (592 aa).

Glu-173 contacts L-aspartate. An aspartate region spans residues 197–200; it reads QLFK. Arg-219 serves as a coordination point for L-aspartate. ATP-binding positions include 219–221 and Gln-228; that span reads RDE. His-448 serves as a coordination point for L-aspartate. Glu-482 contacts ATP. L-aspartate is bound at residue Arg-489. 534 to 537 contributes to the ATP binding site; sequence GLDR.

The protein belongs to the class-II aminoacyl-tRNA synthetase family. Type 1 subfamily. Homodimer.

It is found in the cytoplasm. The enzyme catalyses tRNA(Asp) + L-aspartate + ATP = L-aspartyl-tRNA(Asp) + AMP + diphosphate. Functionally, catalyzes the attachment of L-aspartate to tRNA(Asp) in a two-step reaction: L-aspartate is first activated by ATP to form Asp-AMP and then transferred to the acceptor end of tRNA(Asp). The polypeptide is Aspartate--tRNA ligase (Shewanella putrefaciens (strain CN-32 / ATCC BAA-453)).